Here is an 85-residue protein sequence, read N- to C-terminus: MPKLEMMLLVLLILPLCYIDAVGPPPPWNMEDEIIEHWQKLHCHEISDPTPWILCSPEPLCGGKGCCAQEVCDCSGPVCTCPPCL.

A signal peptide spans 1–21 (MPKLEMMLLVLLILPLCYIDA). Residues 22 to 40 (VGPPPPWNMEDEIIEHWQK) constitute a propeptide that is removed on maturation.

Belongs to the conotoxin D superfamily. Contains 5 disulfide bonds. As to expression, expressed by the venom duct.

It localises to the secreted. Its function is as follows. Probable neurotoxin. The chain is Conotoxin Lt28.2 from Conus litteratus (Lettered cone).